Consider the following 414-residue polypeptide: Putative transporter AmpG 4 (414 aa).

A run of 12 helical transmembrane segments spans residues 15 to 35, 44 to 63, 84 to 104, 109 to 129, 150 to 170, 177 to 197, 230 to 250, 268 to 288, 295 to 315, 324 to 344, 360 to 379, and 389 to 409; these read IFIL…TLAV, IAVI…KVFW, WLIL…KENP, TSFY…DIAV, VFGY…LAEI, LTFC…ITVN, FAVT…MLGA, IIAK…GGIV, FKGL…FIWL, ALLI…TALV, YALL…IYAG, and GFFL…MYLN.

It belongs to the major facilitator superfamily.

It is found in the cell inner membrane. The chain is Putative transporter AmpG 4 (ampG4) from Rickettsia conorii (strain ATCC VR-613 / Malish 7).